The chain runs to 85 residues: Toxin Cll5c* (85 aa).

Residues 1–17 form the signal peptide; sequence MNSLLIITACLVLFVWA. Residues 18–83 form the LCN-type CS-alpha/beta domain; it reads KEGYLVNKST…TYPLPNKSCS (66 aa). Cystine bridges form between cysteine 29–cysteine 82, cysteine 33–cysteine 58, cysteine 42–cysteine 63, and cysteine 46–cysteine 65. Positions 84–85 are cleaved as a propeptide — removed by a carboxypeptidase; it reads KK.

This sequence belongs to the long (4 C-C) scorpion toxin superfamily. Sodium channel inhibitor family. Beta subfamily. Expressed by the venom gland.

It is found in the secreted. Functionally, beta toxins bind voltage-independently at site-4 of sodium channels (Nav) and shift the voltage of activation toward more negative potentials thereby affecting sodium channel activation and promoting spontaneous and repetitive firing. The sequence is that of Toxin Cll5c* from Centruroides limpidus (Mexican scorpion).